A 235-amino-acid chain; its full sequence is Chalcone--flavanone isomerase 2 (235 aa).

2 residues coordinate substrate: T50 and S192.

The protein belongs to the chalcone isomerase family.

It catalyses the reaction a chalcone = a flavanone.. Its pathway is secondary metabolite biosynthesis; flavonoid biosynthesis. Functionally, catalyzes the intramolecular cyclization of bicyclic chalcones into tricyclic (S)-flavanones. Responsible for the isomerization of 4,2',4',6'-tetrahydroxychalcone (also termed chalcone) into naringenin. The protein is Chalcone--flavanone isomerase 2 (CHI2) of Chrysanthemum morifolium (Florist's daisy).